A 182-amino-acid polypeptide reads, in one-letter code: dTTP/UTP pyrophosphatase (182 aa).

Residue Asp64 is the Proton acceptor of the active site.

It belongs to the Maf family. YhdE subfamily. A divalent metal cation serves as cofactor.

Its subcellular location is the cytoplasm. It carries out the reaction dTTP + H2O = dTMP + diphosphate + H(+). It catalyses the reaction UTP + H2O = UMP + diphosphate + H(+). Functionally, nucleoside triphosphate pyrophosphatase that hydrolyzes dTTP and UTP. May have a dual role in cell division arrest and in preventing the incorporation of modified nucleotides into cellular nucleic acids. The protein is dTTP/UTP pyrophosphatase of Thermosipho melanesiensis (strain DSM 12029 / CIP 104789 / BI429).